We begin with the raw amino-acid sequence, 183 residues long: Small ribosomal subunit protein uS4c (183 aa).

Residues 82–143 (MRLDNILFRL…KQRSKALIQN (62 aa)) form the S4 RNA-binding domain.

The protein belongs to the universal ribosomal protein uS4 family. Part of the 30S ribosomal subunit. Contacts protein S5. The interaction surface between S4 and S5 is involved in control of translational fidelity.

It is found in the plastid. It localises to the chloroplast. Functionally, one of the primary rRNA binding proteins, it binds directly to 16S rRNA where it nucleates assembly of the body of the 30S subunit. Its function is as follows. With S5 and S12 plays an important role in translational accuracy. This is Small ribosomal subunit protein uS4c (rps4) from Gladiolus communis (Cornflag).